The chain runs to 533 residues: E3 ubiquitin-protein ligase arih1l (533 aa).

2 disordered regions span residues 1–35 (MDSDEGYNYEFDDEEEEEEEEEECSVDSGEEEAVD) and 48–73 (PAVAGGEPDDCADTGGGGPGPGQEDE). Residues 158-369 (QDLPCQICYL…SAWYNCNRYN (212 aa)) are TRIAD supradomain. Zn(2+) is bound by residues Cys162, Cys165, Cys179, His181, Cys184, Cys187, Cys207, Cys212, Cys252, Cys257, Cys273, Cys275, Cys280, Cys283, His288, Cys293, Cys320, and Cys323. The RING-type 1 zinc-finger motif lies at 162-212 (CQICYLNYPNSYFTGLECGHKFCMQCWGDYLTTKIIEEGMGQTISCPAHNC). The IBR-type zinc-finger motif lies at 232–293 (LKYQHLITNS…GENWHDPVKC (62 aa)). The RING-type 2; atypical zinc-finger motif lies at 320–351 (CPKCHVTIEKDGGCNHMVCRNQNCKAEFCWVC). Cys333 is an active-site residue. Residues Cys338, Cys343, Cys348, Cys351, His358, and Cys365 each contribute to the Zn(2+) site. Residues 409–425 (KLYAQVKQKMEEMQQHN) are a coiled coil.

This sequence belongs to the RBR family. Ariadne subfamily.

The protein resides in the cytoplasm. It catalyses the reaction [E2 ubiquitin-conjugating enzyme]-S-ubiquitinyl-L-cysteine + [acceptor protein]-L-lysine = [E2 ubiquitin-conjugating enzyme]-L-cysteine + [acceptor protein]-N(6)-ubiquitinyl-L-lysine.. It functions in the pathway protein modification; protein ubiquitination. E3 ubiquitin-protein ligase, which catalyzes polyubiquitination of target proteins together with ubiquitin-conjugating enzyme E2 ube2l3. The chain is E3 ubiquitin-protein ligase arih1l (arih1l) from Danio rerio (Zebrafish).